The primary structure comprises 616 residues: Dihydroxy-acid dehydratase (616 aa).

Asp-81 provides a ligand contact to Mg(2+). Position 122 (Cys-122) interacts with [2Fe-2S] cluster. Residues Asp-123 and Lys-124 each coordinate Mg(2+). Lys-124 carries the N6-carboxylysine modification. Cys-195 provides a ligand contact to [2Fe-2S] cluster. Residue Glu-491 coordinates Mg(2+). Catalysis depends on Ser-517, which acts as the Proton acceptor.

This sequence belongs to the IlvD/Edd family. Homodimer. It depends on [2Fe-2S] cluster as a cofactor. The cofactor is Mg(2+).

It carries out the reaction (2R)-2,3-dihydroxy-3-methylbutanoate = 3-methyl-2-oxobutanoate + H2O. The catalysed reaction is (2R,3R)-2,3-dihydroxy-3-methylpentanoate = (S)-3-methyl-2-oxopentanoate + H2O. Its pathway is amino-acid biosynthesis; L-isoleucine biosynthesis; L-isoleucine from 2-oxobutanoate: step 3/4. The protein operates within amino-acid biosynthesis; L-valine biosynthesis; L-valine from pyruvate: step 3/4. Its function is as follows. Functions in the biosynthesis of branched-chain amino acids. Catalyzes the dehydration of (2R,3R)-2,3-dihydroxy-3-methylpentanoate (2,3-dihydroxy-3-methylvalerate) into 2-oxo-3-methylpentanoate (2-oxo-3-methylvalerate) and of (2R)-2,3-dihydroxy-3-methylbutanoate (2,3-dihydroxyisovalerate) into 2-oxo-3-methylbutanoate (2-oxoisovalerate), the penultimate precursor to L-isoleucine and L-valine, respectively. In Edwardsiella ictaluri (strain 93-146), this protein is Dihydroxy-acid dehydratase.